The primary structure comprises 513 residues: Bifunctional purine biosynthesis protein PurH (513 aa).

An MGS-like domain is found at 1–145 (MTKRALISVS…KNYQDVTAVV (145 aa)).

Belongs to the PurH family.

The catalysed reaction is (6R)-10-formyltetrahydrofolate + 5-amino-1-(5-phospho-beta-D-ribosyl)imidazole-4-carboxamide = 5-formamido-1-(5-phospho-D-ribosyl)imidazole-4-carboxamide + (6S)-5,6,7,8-tetrahydrofolate. The enzyme catalyses IMP + H2O = 5-formamido-1-(5-phospho-D-ribosyl)imidazole-4-carboxamide. It participates in purine metabolism; IMP biosynthesis via de novo pathway; 5-formamido-1-(5-phospho-D-ribosyl)imidazole-4-carboxamide from 5-amino-1-(5-phospho-D-ribosyl)imidazole-4-carboxamide (10-formyl THF route): step 1/1. It functions in the pathway purine metabolism; IMP biosynthesis via de novo pathway; IMP from 5-formamido-1-(5-phospho-D-ribosyl)imidazole-4-carboxamide: step 1/1. This chain is Bifunctional purine biosynthesis protein PurH, found in Enterococcus faecalis (strain ATCC 700802 / V583).